The following is a 193-amino-acid chain: Ribosomal RNA small subunit methyltransferase G (193 aa).

Residues glycine 62, phenylalanine 67, 111–112 (IE), and arginine 125 contribute to the S-adenosyl-L-methionine site.

The protein belongs to the methyltransferase superfamily. RNA methyltransferase RsmG family.

It is found in the cytoplasm. It catalyses the reaction guanosine(527) in 16S rRNA + S-adenosyl-L-methionine = N(7)-methylguanosine(527) in 16S rRNA + S-adenosyl-L-homocysteine. Functionally, specifically methylates the N7 position of guanine in position 527 of 16S rRNA. This chain is Ribosomal RNA small subunit methyltransferase G, found in Gluconobacter oxydans (strain 621H) (Gluconobacter suboxydans).